A 355-amino-acid polypeptide reads, in one-letter code: Vacuolar protein sorting-associated protein 37C (355 aa).

Ser-29 carries the phosphoserine modification. Positions 78-167 (VERCQEQKAK…RKPRASQELA (90 aa)) constitute a VPS37 C-terminal domain. Residues 159–355 (KPRASQELAG…PPPGPAWPGY (197 aa)) are disordered. Composition is skewed to pro residues over residues 170 to 186 (APPP…PQGT) and 194 to 214 (PQPP…PSLP). Residues 291–304 (APSPGYPQQSPYPA) show a composition bias toward low complexity. Residues 321–355 (PGQPQPSVPLQPPYPPGPAPPYGFPPPPGPAWPGY) are compositionally biased toward pro residues.

It belongs to the VPS37 family. As to quaternary structure, component of the ESCRT-I complex (endosomal sorting complex required for transport I) which consists of TSG101, VPS28, a VPS37 protein (VPS37A to -D) and MVB12A or MVB12B in a 1:1:1:1 stoichiometry. Interacts with TSG101, VPS28, MVB12A and MVB12B. Component of the ESCRT-I complex (endosomal sorting complex required for transport I) which consists of TSG101, VPS28, a VPS37 protein (VPS37A to -D) and UBAP1 in a 1:1:1:1 stoichiometry. Interacts with HGS and STAM2. Interacts with CEP55. Phosphorylated by TBK1.

It is found in the late endosome membrane. In terms of biological role, component of the ESCRT-I complex, a regulator of vesicular trafficking process. Required for the sorting of endocytic ubiquitinated cargos into multivesicular bodies. May be involved in cell growth and differentiation. This Homo sapiens (Human) protein is Vacuolar protein sorting-associated protein 37C (VPS37C).